The chain runs to 379 residues: Reducing end xylose-releasing exo-oligoxylanase (379 aa).

E66 functions as the Proton donor in the catalytic mechanism. D259 functions as the Proton acceptor in the catalytic mechanism.

Belongs to the glycosyl hydrolase 8 (cellulase D) family.

It catalyses the reaction Hydrolysis of (1-&gt;4)-beta-D-xylose residues from the reducing end of oligosaccharides.. Functionally, hydrolyzes xylooligosaccharides with a degree of polymerization of greater than or equal to 3, releasing xylose from the reducing end. Has low activity on birchwood xylan, oat spelt xylan and arabinoxylan. The sequence is that of Reducing end xylose-releasing exo-oligoxylanase from Bifidobacterium adolescentis (strain ATCC 15703 / DSM 20083 / NCTC 11814 / E194a).